The primary structure comprises 839 residues: Protein translocase subunit SecA (839 aa).

ATP is bound by residues glutamine 85, 103–107 (GEGKT), and aspartate 493. Positions 780-790 (QIHEQERERAS) are enriched in basic and acidic residues. The segment at 780-839 (QIHEQERERASQRATTAAPQNIQSQQSANTDDLPKVERNEACPCGSGKKFKNCHGRKSFS) is disordered. Residues 791-809 (QRATTAAPQNIQSQQSANT) show a composition bias toward polar residues. Residues cysteine 821, cysteine 823, cysteine 832, and histidine 833 each coordinate Zn(2+). Over residues 827–839 (KKFKNCHGRKSFS) the composition is skewed to basic residues.

It belongs to the SecA family. Monomer and homodimer. Part of the essential Sec protein translocation apparatus which comprises SecA, SecYEG and auxiliary proteins SecDF. Other proteins may also be involved. Zn(2+) serves as cofactor.

The protein localises to the cell membrane. It localises to the cytoplasm. It carries out the reaction ATP + H2O + cellular proteinSide 1 = ADP + phosphate + cellular proteinSide 2.. In terms of biological role, part of the Sec protein translocase complex. Interacts with the SecYEG preprotein conducting channel. Has a central role in coupling the hydrolysis of ATP to the transfer of proteins into and across the cell membrane, serving as an ATP-driven molecular motor driving the stepwise translocation of polypeptide chains across the membrane. This chain is Protein translocase subunit SecA, found in Streptococcus pyogenes serotype M6 (strain ATCC BAA-946 / MGAS10394).